We begin with the raw amino-acid sequence, 322 residues long: Probable 2-oxoglutarate-dependent dioxygenase AOP1 (322 aa).

Residues 165–271 (TYYLTRLMKY…RYSTGLFSIP (107 aa)) form the Fe2OG dioxygenase domain. Fe cation is bound by residues His195, Asp197, and His252. Arg262 is a binding site for 2-oxoglutarate.

It belongs to the iron/ascorbate-dependent oxidoreductase family. It depends on Fe(2+) as a cofactor.

Its function is as follows. Probable 2-oxoglutarate-dependent dioxygenase that may be involved in glucosinolates biosynthesis. May play a role in the production of aliphatic glucosinolates. The protein is Probable 2-oxoglutarate-dependent dioxygenase AOP1 (AOP1) of Arabidopsis thaliana (Mouse-ear cress).